A 93-amino-acid polypeptide reads, in one-letter code: Putative pterin-4-alpha-carbinolamine dehydratase (93 aa).

This sequence belongs to the pterin-4-alpha-carbinolamine dehydratase family.

It carries out the reaction (4aS,6R)-4a-hydroxy-L-erythro-5,6,7,8-tetrahydrobiopterin = (6R)-L-erythro-6,7-dihydrobiopterin + H2O. The protein is Putative pterin-4-alpha-carbinolamine dehydratase of Roseiflexus castenholzii (strain DSM 13941 / HLO8).